A 206-amino-acid polypeptide reads, in one-letter code: uncharacterized protein (206 aa).

The first 18 residues, Met-1–Ala-18, serve as a signal peptide directing secretion.

This is an uncharacterized protein from Haemophilus influenzae (strain ATCC 51907 / DSM 11121 / KW20 / Rd).